A 1350-amino-acid chain; its full sequence is Spike glycoprotein (1350 aa).

A signal peptide spans 1–12 (MTRLMCLLMSLS). Residues 13-1295 (IFVRGFDSQF…GNYTYYNKWP (1283 aa)) lie on the Extracellular side of the membrane. In terms of domain architecture, BetaCoV S1-NTD spans 21-356 (QFVDMSPASN…DDLSQLHCSY (336 aa)). N-linked (GlcNAc...) asparagine; by host glycosylation is found at Asn30, Asn71, Asn111, Asn132, Asn162, Asn172, Asn227, and Asn241. Cystine bridges form between Cys191-Cys242 and Cys344-Cys354. The N-linked (GlcNAc...) asparagine; by host glycan is linked to Asn384. Positions 386–592 (TECDFSPMLT…GTGTDSVCPM (207 aa)) constitute a BetaCoV S1-CTD domain. A disulfide bond links Cys388 and Cys412. Asn415 is a glycosylation site (N-linked (GlcNAc...) asparagine; by host). Intrachain disulfides connect Cys430–Cys483 and Cys442–Cys590. N-linked (GlcNAc...) asparagine; by host glycosylation is found at Asn492, Asn624, Asn723, Asn762, Asn773, Asn784, and Asn869. 2 fusion peptide regions span residues 885–906 (SAIE…MQGY) and 904–926 (QGYD…AQYV). Residues Cys909 and Cys922 are joined by a disulfide bond. The interval 991 to 1041 (QKLIANKFNQALGAMQTGFTTSNLAFSKVQDAVNANAQALSKLASELSNTF) is heptad repeat 1. Residues 1020–1064 (QDAVNANAQALSKLASELSNTFGAISSSISDILARLDTVEQDAQI) adopt a coiled-coil conformation. N-linked (GlcNAc...) asparagine; by host glycosylation is found at Asn1142, Asn1145, Asn1172, Asn1224, Asn1240, Asn1255, Asn1276, and Asn1287. A heptad repeat 2 region spans residues 1245–1284 (GPNFAEISKINTTLLDLSDEMAILQEVVKQLNDSYIDLKE). Residues 1257 to 1285 (TLLDLSDEMAILQEVVKQLNDSYIDLKEL) adopt a coiled-coil conformation. The helical transmembrane segment at 1296 to 1316 (WYIWLGFIAGLVALLLCVFFL) threads the bilayer. Residues 1317-1350 (LCCTGCGTSCLGKMKCKNCCDSYEEYDVEKIHVH) are Cytoplasmic-facing. A KxHxx motif is present at residues 1348 to 1350 (HVH).

This sequence belongs to the betacoronaviruses spike protein family. Homotrimer; each monomer consists of a S1 and a S2 subunit. The resulting peplomers protrude from the virus surface as spikes. Post-translationally, specific enzymatic cleavages in vivo yield mature proteins. Specific enzymatic cleavages in vivo yield mature proteins. The precursor is processed into S1 and S2 by host cell furin or another cellular protease to yield the mature S1 and S2 proteins. Additionally, a second cleavage leads to the release of a fusion peptide after viral attachment to host cell receptor. In terms of processing, the cytoplasmic Cys-rich domain is palmitoylated. Spike glycoprotein is digested within host endosomes.

It localises to the virion membrane. The protein localises to the host endoplasmic reticulum-Golgi intermediate compartment membrane. Its subcellular location is the host cell membrane. Functionally, attaches the virion to the cell membrane by interacting with host receptor, initiating the infection. Its function is as follows. Mediates fusion of the virion and cellular membranes by acting as a class I viral fusion protein. Under the current model, the protein has at least three conformational states: pre-fusion native state, pre-hairpin intermediate state, and post-fusion hairpin state. During viral and target cell membrane fusion, the coiled coil regions (heptad repeats) assume a trimer-of-hairpins structure, positioning the fusion peptide in close proximity to the C-terminal region of the ectodomain. The formation of this structure appears to drive apposition and subsequent fusion of viral and target cell membranes. Acts as a viral fusion peptide which is unmasked following S2 cleavage occurring upon virus endocytosis. The polypeptide is Spike glycoprotein (Tylonycteris pachypus (Lesser bamboo bat)).